The chain runs to 177 residues: Endoribonuclease YbeY (177 aa).

Residues His-114, His-118, and His-124 each coordinate Zn(2+). Residues 154-177 (SYPEAIPTNPAPRRQASSSAGHIE) form a disordered region. A compositionally biased stretch (polar residues) spans 168-177 (QASSSAGHIE).

Belongs to the endoribonuclease YbeY family. Zn(2+) serves as cofactor.

The protein localises to the cytoplasm. Its function is as follows. Single strand-specific metallo-endoribonuclease involved in late-stage 70S ribosome quality control and in maturation of the 3' terminus of the 16S rRNA. The chain is Endoribonuclease YbeY from Cellvibrio japonicus (strain Ueda107) (Pseudomonas fluorescens subsp. cellulosa).